The primary structure comprises 99 residues: DNA-binding protein HU (99 aa).

Positions 67-86 (REGRNPKTGAKMKIDAYNQP) are disordered.

This sequence belongs to the bacterial histone-like protein family. In terms of assembly, homodimer.

Functionally, histone-like DNA-binding protein which is capable of wrapping DNA to stabilize it, and thus to prevent its denaturation under extreme environmental conditions. This Rickettsia conorii (strain ATCC VR-613 / Malish 7) protein is DNA-binding protein HU (hup).